Reading from the N-terminus, the 363-residue chain is GDP-fucose transporter (363 aa).

Helical transmembrane passes span 30-47 (VITA…LVFL), 62-79 (FITW…LFLS), 126-148 (VSFY…YLIL), 152-171 (TSGQ…LLGV), 180-202 (LSYT…AIYT), 222-244 (LNAL…VFYF), 251-273 (TFWI…TGWQ), and 307-326 (LLWW…YTYV). The segment at 334–363 (KNSGASPASEAKSDKVKLLGRDGNAAEESV) is disordered. Residues 344 to 353 (AKSDKVKLLG) show a composition bias toward basic and acidic residues.

Belongs to the TPT transporter family. SLC35C subfamily.

It localises to the golgi apparatus membrane. Functionally, involved in GDP-fucose import from the cytoplasm into the Golgi lumen. This Caenorhabditis elegans protein is GDP-fucose transporter.